A 65-amino-acid chain; its full sequence is Sec-independent protein translocase protein TatA (65 aa).

The chain crosses the membrane as a helical span at residues 9–29 (ILIIVLLVVVVFGIGKLPQVG). Positions 43–65 (SSGEEEKEEVETKEETKTIEKSE) are disordered. Positions 45–54 (GEEEKEEVET) are enriched in acidic residues. The span at 55–65 (KEETKTIEKSE) shows a compositional bias: basic and acidic residues.

This sequence belongs to the TatA/E family. In terms of assembly, forms a complex with TatC.

It localises to the cell membrane. Its function is as follows. Part of the twin-arginine translocation (Tat) system that transports large folded proteins containing a characteristic twin-arginine motif in their signal peptide across membranes. TatA could form the protein-conducting channel of the Tat system. This is Sec-independent protein translocase protein TatA from Dehalococcoides mccartyi (strain ATCC BAA-2266 / KCTC 15142 / 195) (Dehalococcoides ethenogenes (strain 195)).